Consider the following 351-residue polypeptide: Nicotinate-nucleotide--dimethylbenzimidazole phosphoribosyltransferase (351 aa).

The active-site Proton acceptor is E317.

This sequence belongs to the CobT family.

It catalyses the reaction 5,6-dimethylbenzimidazole + nicotinate beta-D-ribonucleotide = alpha-ribazole 5'-phosphate + nicotinate + H(+). Its pathway is nucleoside biosynthesis; alpha-ribazole biosynthesis; alpha-ribazole from 5,6-dimethylbenzimidazole: step 1/2. Functionally, catalyzes the synthesis of alpha-ribazole-5'-phosphate from nicotinate mononucleotide (NAMN) and 5,6-dimethylbenzimidazole (DMB). The sequence is that of Nicotinate-nucleotide--dimethylbenzimidazole phosphoribosyltransferase from Pseudomonas putida (strain W619).